The following is a 274-amino-acid chain: Penicillin-insensitive murein endopeptidase (274 aa).

The first 19 residues, 1 to 19 (MNKTAIALLALLASSASLA), serve as a signal peptide directing secretion. Cystine bridges form between Cys-44–Cys-265, Cys-187–Cys-235, and Cys-216–Cys-223. Residues His-110, His-113, Asp-120, Asp-147, His-150, and His-211 each contribute to the Zn(2+) site. The disordered stretch occupies residues 227 to 274 (PLPPPGDGCGAELQSWFEPPKPGTTKPEKKTPPPLPPSCQALLDEHVI).

The protein belongs to the peptidase M74 family. As to quaternary structure, dimer. Zn(2+) is required as a cofactor.

The protein localises to the periplasm. In terms of biological role, murein endopeptidase that cleaves the D-alanyl-meso-2,6-diamino-pimelyl amide bond that connects peptidoglycan strands. Likely plays a role in the removal of murein from the sacculus. This is Penicillin-insensitive murein endopeptidase from Escherichia coli O6:K15:H31 (strain 536 / UPEC).